Consider the following 256-residue polypeptide: uncharacterized protein (256 aa).

3 helical membrane-spanning segments follow: residues leucine 42–phenylalanine 62, phenylalanine 73–leucine 93, and tryptophan 108–valine 128.

It localises to the cell membrane. This is an uncharacterized protein from Mycoplasma genitalium (strain ATCC 33530 / DSM 19775 / NCTC 10195 / G37) (Mycoplasmoides genitalium).